A 612-amino-acid polypeptide reads, in one-letter code: Probable Xaa-Pro aminopeptidase P (612 aa).

Residues aspartate 409, aspartate 420, glutamate 518, and glutamate 532 each coordinate Mn(2+).

The protein belongs to the peptidase M24B family. It depends on Mn(2+) as a cofactor.

It catalyses the reaction Release of any N-terminal amino acid, including proline, that is linked to proline, even from a dipeptide or tripeptide.. Its function is as follows. Catalyzes the removal of a penultimate prolyl residue from the N-termini of peptides. In Verticillium alfalfae (strain VaMs.102 / ATCC MYA-4576 / FGSC 10136) (Verticillium wilt of alfalfa), this protein is Probable Xaa-Pro aminopeptidase P (AMPP).